A 2517-amino-acid polypeptide reads, in one-letter code: Non-reducing polyketide synthase pkbA (2517 aa).

Positions 59–250 are N-terminal acylcarrier protein transacylase domain (SAT); it reads LERVAGPAEK…KRFDLRGRFH (192 aa). Residues 380 to 775 form the Ketosynthase family 3 (KS3) domain; that stretch reads SEPIAIIGMG…SANTVSSLKE (396 aa). Catalysis depends on for beta-ketoacyl synthase activity residues Cys547, His682, and His721. The interval 849-1158 is malonyl-CoA:ACP transacylase (MAT) domain; it reads AFGGQVARSV…TGTAALADAT (310 aa). Ser935 serves as the catalytic For acyl/malonyl transferase activity. The N-terminal hotdog fold stretch occupies residues 1221-1353; that stretch reads EEFLTFVKYK…GTVVLRENDT (133 aa). Residues 1221 to 1530 form the PKS/mFAS DH domain; sequence EEFLTFVKYK…FTRVQISSLG (310 aa). The segment at 1251 to 1525 is product template (PT) domain; it reads FVKGHAVLAE…ILGAHFTRVQ (275 aa). Residue His1255 is the Proton acceptor; for dehydratase activity of the active site. The C-terminal hotdog fold stretch occupies residues 1379–1530; the sequence is DCHILQGPVV…FTRVQISSLG (152 aa). Asp1437 functions as the Proton donor; for dehydratase activity in the catalytic mechanism. The 78-residue stretch at 1574-1651 folds into the Carrier 1 domain; the sequence is RPTLEISEKL…SISKCLASYL (78 aa). Ser1611 is subject to O-(pantetheine 4'-phosphoryl)serine. A disordered region spans residues 1659–1684; that stretch reads QPEDLADADSVESDSDMPTGAVTSGI. Acidic residues predominate over residues 1662–1673; the sequence is DLADADSVESDS. One can recognise a Carrier 2 domain in the interval 1685 to 1761; sequence TTPDDAVSRL…DLIALVPALN (77 aa). An O-(pantetheine 4'-phosphoryl)serine modification is found at Ser1721. The tract at residues 1976–2075 is methyltransferase (CMeT) domain; sequence LELGGGTGGT…IHRMLRPDGF (100 aa). The segment at 2200–2514 is thioesterase (TE) domain; the sequence is LMIHGGGHIM…RGYDFLKEEV (315 aa).

It depends on pantetheine 4'-phosphate as a cofactor.

The catalysed reaction is 3 malonyl-CoA + acetyl-CoA + S-adenosyl-L-methionine + H(+) = 3-methylorsellinate + S-adenosyl-L-homocysteine + 3 CO2 + 4 CoA. It functions in the pathway phytotoxin biosynthesis. Non-reducing polyketide synthase; part of the gene cluster that mediates the biosynthesis of cichorine, a phytotoxin active against knapweed, corn, and soybeans. The first step in the pathway is performed by the non-reducing polyketide synthase pkbA that condenses one acetyl-CoA starter unit with 3 malonyl-CoA units. PkbA also catalyzes one methylation step to produce 3-methylorsellinate. The nonribosomal peptide synthase-like protein cicB, the cytochrome P450 monooxygenase cicH and the O-methyltransferase cicE are involved in the conversion of 3-methylorsellinate into nidulol. CicB converts 3-methylorsellinate to a yet unidentified intermediate, cicH may play a ring-closing role for cichorine and cicE is plausibly responsible for the methylation of one of the phenol groups. The oxidoreductase cicC acts downstream with still unidentified enzymes to further convert nidulol into cichorin. The protein is Non-reducing polyketide synthase pkbA of Emericella nidulans (strain FGSC A4 / ATCC 38163 / CBS 112.46 / NRRL 194 / M139) (Aspergillus nidulans).